We begin with the raw amino-acid sequence, 265 residues long: Short chain dehydrogenase mdpC (265 aa).

Positions 25, 98, and 131 each coordinate NADP(+). Catalysis depends on proton donor residues serine 147 and serine 148. Residues tyrosine 162, lysine 166, and threonine 197 each coordinate NADP(+). Catalysis depends on tyrosine 162, which acts as the Proton acceptor. Lysine 166 serves as the catalytic Lowers pKa of active site Tyr.

It belongs to the short-chain dehydrogenases/reductases (SDR) family.

It carries out the reaction 3,8,9,10-tetrahydroxy-6-methyl-1,4-dihydroanthracen-1-one + NADPH + H(+) = (3R)-3,8,9,10-tetrahydroxy-6-methyl-1,2,3,4-tetrahydroanthracen-1-one + NADP(+). Its pathway is secondary metabolite biosynthesis. Its function is as follows. Short chain dehydrogenase; part of the gene cluster that mediates the biosynthesis of monodictyphenone, a prenyl xanthone derivative. The pathway begins with the synthesis of atrochrysone thioester by the polyketide synthase (PKS) mdpG. The atrochrysone carboxyl ACP thioesterase mdpF then breaks the thioester bond and releases the atrochrysone carboxylic acid from mdpG. The atrochrysone carboxylic acid is then converted to atrochrysone which is further transformed into emodin anthrone. The next step is performed by the anthrone oxygenase mdpH that catalyzes the oxidation of emodinanthrone to emodin. Emodin is further modified to yield monodictyphenone via several steps involving mdpB, mdpC mdpJ, mdpK and mdpL. The short chain dehydrogenase mdpC converts the tautomers of emodin hydroquinone into the 3-hydroxy-3,4-dihydroan-thracen-1(2H)-one derivative. These enzymes with xptA, xptB and xptC are also proposed to be involved in the synthesis of shamixanthone from emodin. Especially, direct reduction of emodin by the short chain dehydrogenase mdpC followed by dehydration catalyzed by the scytalone dehydratase-like protein mdpB gives loss of oxygen and formation of chrysophanol intermediate in two simple steps. This is Short chain dehydrogenase mdpC from Emericella nidulans (strain FGSC A4 / ATCC 38163 / CBS 112.46 / NRRL 194 / M139) (Aspergillus nidulans).